The following is a 553-amino-acid chain: Membrane protein insertase YidC (553 aa).

Residues 3-23 (IKRTILWVIFSLSVVLLFDNW) traverse the membrane as a helical segment. Positions 44 to 64 (AAAPGGTPAGDVPKAAAPAAA) are disordered. 4 helical membrane-spanning segments follow: residues 359–379 (LLGNWGWSIVALTVLVKLVFF), 429–449 (LGGCLPIVIQIPVFIALYWVL), 467–487 (LASPDPFYILPILMAVSMFVQ), and 507–527 (PIAFSVMFFFFPAGLVLYWVV).

It belongs to the OXA1/ALB3/YidC family. Type 1 subfamily. As to quaternary structure, interacts with the Sec translocase complex via SecD. Specifically interacts with transmembrane segments of nascent integral membrane proteins during membrane integration.

It is found in the cell inner membrane. Its function is as follows. Required for the insertion and/or proper folding and/or complex formation of integral membrane proteins into the membrane. Involved in integration of membrane proteins that insert both dependently and independently of the Sec translocase complex, as well as at least some lipoproteins. Aids folding of multispanning membrane proteins. The polypeptide is Membrane protein insertase YidC (Ralstonia nicotianae (strain ATCC BAA-1114 / GMI1000) (Ralstonia solanacearum)).